The following is a 144-amino-acid chain: Large ribosomal subunit protein uL13 (144 aa).

The protein belongs to the universal ribosomal protein uL13 family. Part of the 50S ribosomal subunit.

This protein is one of the early assembly proteins of the 50S ribosomal subunit, although it is not seen to bind rRNA by itself. It is important during the early stages of 50S assembly. The chain is Large ribosomal subunit protein uL13 from Herpetosiphon aurantiacus (strain ATCC 23779 / DSM 785 / 114-95).